Reading from the N-terminus, the 86-residue chain is Small ribosomal subunit protein uS17 (86 aa).

Belongs to the universal ribosomal protein uS17 family. In terms of assembly, part of the 30S ribosomal subunit.

One of the primary rRNA binding proteins, it binds specifically to the 5'-end of 16S ribosomal RNA. In Chlamydia pneumoniae (Chlamydophila pneumoniae), this protein is Small ribosomal subunit protein uS17.